The primary structure comprises 284 residues: Exosome complex component MTR3 (284 aa).

The protein belongs to the RNase PH family. Component of the RNA exosome complex.

It localises to the cytoplasm. The protein resides in the nucleus. It is found in the nucleolus. Non-catalytic component of the RNA exosome complex which has 3'-&gt;5' exoribonuclease activity and participates in a multitude of cellular RNA processing and degradation events. The sequence is that of Exosome complex component MTR3 (MTR3) from Chaetomium thermophilum (strain DSM 1495 / CBS 144.50 / IMI 039719) (Thermochaetoides thermophila).